We begin with the raw amino-acid sequence, 197 residues long: Serine recombinase gin (197 aa).

The Resolvase/invertase-type recombinase catalytic domain occupies 1–134 (MLIGYVRVST…AGLAAARNKG (134 aa)). Catalysis depends on S9, which acts as the O-(5'-phospho-DNA)-serine intermediate. The segment at residues 138 to 181 (GRPPKLTKAEWEQAGRLLAQGIPRKQVALIYDVALSTLYKKHPA) is a DNA-binding region (H-T-H motif).

Belongs to the site-specific recombinase resolvase family. Homodimer. During inversion, two dimers associate to form a homotetramer.

The protein resides in the host cytoplasm. Functionally, performs inversion of a viral segment (G-segment) that encodes two alternate pairs of tail fiber proteins thereby modifying the host specificity of the virus. Binds as a dimer to the viral gix sites which are 34-bp palindromic sequences that flank the invertible G-segment. Catalyzes site-specific recombination in the presence of the host factor Fis. Gin dimers bound to each of the gix sites and host factor Fis bound to the enhancer come together to form the synaptic complex. Each Gin monomer introduces a nick and becomes covalently attached to the 5'-phosphate of the DNA, resulting in double-stranded staggered breaks at both recombination sites. A 180 degrees rotation of one of the two Gin dimers followed by religation of the DNA leads to the inversion of the G-segment. The polypeptide is Serine recombinase gin (gin) (Escherichia coli (Bacteriophage D108)).